The primary structure comprises 475 residues: Sulfate adenylyltransferase subunit 1 (475 aa).

The tr-type G domain occupies 25–239; sequence KSLLRFLTCG…EVLETVEIQR (215 aa). Residues 34–41 form a G1 region; that stretch reads GSVDDGKS. Position 34–41 (34–41) interacts with GTP; the sequence is GSVDDGKS. Residues 92 to 96 are G2; sequence GITID. Positions 113–116 are G3; it reads DTPG. Residues 113-117 and 168-171 contribute to the GTP site; these read DTPGH and NKMD. The tract at residues 168 to 171 is G4; that stretch reads NKMD. Residues 206–208 form a G5 region; it reads SAL.

The protein belongs to the TRAFAC class translation factor GTPase superfamily. Classic translation factor GTPase family. CysN/NodQ subfamily. In terms of assembly, heterodimer composed of CysD, the smaller subunit, and CysN.

It catalyses the reaction sulfate + ATP + H(+) = adenosine 5'-phosphosulfate + diphosphate. It participates in sulfur metabolism; hydrogen sulfide biosynthesis; sulfite from sulfate: step 1/3. Its function is as follows. With CysD forms the ATP sulfurylase (ATPS) that catalyzes the adenylation of sulfate producing adenosine 5'-phosphosulfate (APS) and diphosphate, the first enzymatic step in sulfur assimilation pathway. APS synthesis involves the formation of a high-energy phosphoric-sulfuric acid anhydride bond driven by GTP hydrolysis by CysN coupled to ATP hydrolysis by CysD. This Shigella boydii serotype 18 (strain CDC 3083-94 / BS512) protein is Sulfate adenylyltransferase subunit 1.